The sequence spans 278 residues: Coiled-coil domain-containing protein 106 (278 aa).

Residues 61 to 99 (AQLHLALERNSWLQKRIEDLEEERDFLRCQLDKFISSAR) are a coiled coil. Positions 102–119 (ADDHCRGKPGPRRAEGDG) are enriched in basic and acidic residues. Residues 102 to 174 (ADDHCRGKPG…KPKARERQRV (73 aa)) are disordered. Residue serine 128 is modified to Phosphoserine. Low complexity predominate over residues 131 to 144 (ESAASSLSGASEEG). The span at 150 to 166 (KRQKQKGGPGRRRFGKP) shows a compositional bias: basic residues. The short motif at 151 to 164 (RQKQKGGPGRRRFG) is the Bipartite nuclear localization signal element.

As to quaternary structure, interacts with p53/TP53.

The protein localises to the nucleus. In terms of biological role, promotes the degradation of p53/TP53 protein and inhibits its transactivity. The polypeptide is Coiled-coil domain-containing protein 106 (CCDC106) (Bos taurus (Bovine)).